The following is a 368-amino-acid chain: V-type proton ATPase subunit C (368 aa).

This sequence belongs to the V-ATPase C subunit family. In terms of assembly, V-ATPase is a heteromultimeric enzyme composed of a peripheral catalytic V1 complex (components A to H) attached to an integral membrane V0 proton pore complex (components: a, c, c', c'' and d).

In terms of biological role, subunit of the peripheral V1 complex of vacuolar ATPase. Subunit C is necessary for the assembly of the catalytic sector of the enzyme and is likely to have a specific function in its catalytic activity. V-ATPase is responsible for acidifying a variety of intracellular compartments in eukaryotic cells. The polypeptide is V-type proton ATPase subunit C (vatC) (Dictyostelium discoideum (Social amoeba)).